We begin with the raw amino-acid sequence, 550 residues long: Methyl-coenzyme M reductase subunit alpha (550 aa).

Q147 is a binding site for coenzyme F430. Coenzyme B contacts are provided by residues R225, 256-257 (KH), and R270. The residue at position 257 (H257) is a Pros-methylhistidine. At R271 the chain carries 5-methylarginine. Residue Y333 coordinates coenzyme M. Q400 carries the 2-methylglutamine modification. Y444 provides a ligand contact to coenzyme M. G445 carries the 1-thioglycine modification. D450 is subject to (Z)-2,3-didehydroaspartate. An S-methylcysteine modification is found at C452.

It belongs to the methyl-coenzyme M reductase alpha subunit family. In terms of assembly, MCR is a hexamer of two alpha, two beta, and two gamma chains, forming a dimer of heterotrimers. It depends on coenzyme F430 as a cofactor. Post-translationally, the alpha subunit contains six modified amino acids near the active site region. Is methylated on His-257, Arg-271, Gln-400 and Cys-452, probably by the action of specific S-adenosylmethionine-dependent methyltransferases. Also contains a thioglycine at position 445, forming a thiopeptide bond. Contains a didehydroaspartate residue at position 450. The methylation on C5 of Arg-271 is a post-translational methylation not essential in vivo, but which plays a role for the stability and structural integrity of MCR.

It is found in the cytoplasm. It catalyses the reaction coenzyme B + methyl-coenzyme M = methane + coenzyme M-coenzyme B heterodisulfide. Its pathway is one-carbon metabolism; methyl-coenzyme M reduction; methane from methyl-coenzyme M: step 1/1. In terms of biological role, component of the methyl-coenzyme M reductase (MCR) I that catalyzes the reductive cleavage of methyl-coenzyme M (CoM-S-CH3 or 2-(methylthio)ethanesulfonate) using coenzyme B (CoB or 7-mercaptoheptanoylthreonine phosphate) as reductant which results in the production of methane and the mixed heterodisulfide of CoB and CoM (CoM-S-S-CoB). This is the final step in methanogenesis. The sequence is that of Methyl-coenzyme M reductase subunit alpha (mcrA) from Methanothermobacter thermautotrophicus (strain ATCC 29096 / DSM 1053 / JCM 10044 / NBRC 100330 / Delta H) (Methanobacterium thermoautotrophicum).